A 95-amino-acid polypeptide reads, in one-letter code: uncharacterized protein (95 aa).

A helical membrane pass occupies residues 12–32 (IASLVVSVVVLLIGLILWFFI).

The protein localises to the cell membrane. This is an uncharacterized protein from Escherichia coli O6:H1 (strain CFT073 / ATCC 700928 / UPEC).